We begin with the raw amino-acid sequence, 285 residues long: Probable xyloglucan endotransglucosylase/hydrolase protein 12 (285 aa).

The signal sequence occupies residues 1–25; the sequence is MAAFATKQSPLLLASLLILIGVATG. In terms of domain architecture, GH16 spans 26 to 215; it reads SFYDSFDITW…WTNAPFSASY (190 aa). Glu101 acts as the Nucleophile in catalysis. The active-site Proton donor is Glu105. Position 105 (Glu105) interacts with xyloglucan. Asn109 carries N-linked (GlcNAc...) asparagine glycosylation. Residues 118–120, 128–130, 194–195, and Gly199 contribute to the xyloglucan site; these read HTN, NRE, and DW. Cystine bridges form between Cys224-Cys235 and Cys268-Cys282. Arg273 serves as a coordination point for xyloglucan.

Belongs to the glycosyl hydrolase 16 family. XTH group 2 subfamily. In terms of processing, contains at least one intrachain disulfide bond essential for its enzymatic activity. In terms of tissue distribution, root specific.

The protein localises to the secreted. It is found in the cell wall. Its subcellular location is the extracellular space. The protein resides in the apoplast. It catalyses the reaction breaks a beta-(1-&gt;4) bond in the backbone of a xyloglucan and transfers the xyloglucanyl segment on to O-4 of the non-reducing terminal glucose residue of an acceptor, which can be a xyloglucan or an oligosaccharide of xyloglucan.. Catalyzes xyloglucan endohydrolysis (XEH) and/or endotransglycosylation (XET). Cleaves and religates xyloglucan polymers, an essential constituent of the primary cell wall, and thereby participates in cell wall construction of growing tissues. The chain is Probable xyloglucan endotransglucosylase/hydrolase protein 12 (XTH12) from Arabidopsis thaliana (Mouse-ear cress).